The following is a 1182-amino-acid chain: MESMPSFLKDTPAWEKTAPVNGIVGQEPGTSPQDGLRHGALCLGEPAPFWRGVLSTPDSWLPPGFLQGPKDTLSLVEGEGPRNGERKGSWLGGKEGLRWKEAMLAHPLAFCGPACPPRYGPLIPEHSGGHPKSDPVAFRPLHCPFLLETKILERAPFWVPTCLPPYLMSSLPPERPYDWPLAPNPWVYSGSQPKVPSAFGLGSKGFYHKDPNILRPAKEPLAESGMLGLAPGGHLQQACESEGPSLHQRDGETGAGRQQNLCPVFLGYPDTVPRAPWPSCPPGLVHSLGNIWAGPGSNSLGYQLGPPATPRCPSPGPPTPPGGCCSSHLPAREGDLGPCRKCQDSPEGGSSGPGESSEERNKADSRACPPSHHTKLKKTWLTRHSEQFECPGGCSGKEESPATGLRALKRAGSPEVQGASRGPAPKRPSHPFPGTGRQGARAWQETPETIIGSKAEAEQQEEQRGPRDGRIRLQESRLVDTSCQHHLAGVTQCQSCVQAAGEVGVLTGHSQKSRRSPLEEKQLEEEDSSATSEEGGGGPGPEASLNKGLAKHLLSGLGDRLCRLLRKEREALAWAQREGQGPAMTEDSPGIPHCCSRCHHGLFNTHWRCSHCSHRLCVACGRIAGAGKNREKTGSQEQHTDDCAQEAGHAACSLILTQFVSSQALAELSTVMHQVWAKFDIRGHCFCQVDARVWAPGDGGQQKEPTEKTPPTPQPSCNGDSNRTKDIKEETPDSTESPAEDGAGRSPLPCPSLCELLASTAVKLCLGHDRIHMAFAPVTPALPSDDRITNILDSIIAQVVERKIQEKALGPGLRAGSGLRKGLSLPLSPVRTRLSPPGALLWLQEPRPKHGFHLFQEHWRQGQPVLVSGIQKTLRLSLWGMEALGTLGGQVQTLTALGPPQPTNLDSTAFWEGFSHPETRPKLDEGSVLLLHRTLGDKDASRVQNLASSLPLPEYCAHQGKLNLASYLPLGLTLHPLEPQLWAAYGVNSHRGHLGTKNLCVEVSDLISILVHAEAQLPPWYRAQKDFLSGLDGEGLWSPGSQTSTVWHVFRAQDAQRIRRFLQMVCPAGAGTLEPGAPGSCYLDAGLRRRLREEWGVSCWTLLQAPGEAVLVPAGAPHQVQGLVSTISVTQHFLSPETSALSAQLYHQGASLPPDHRMLYAQMDRAVFQAVKAAVGALQEAK.

Disordered stretches follow at residues 227 to 257 (LGLA…GAGR), 302 to 380 (YQLG…KKTW), 411 to 443 (AGSP…ARAW), and 507 to 546 (TGHS…ASLN). Over residues 307–321 (PATPRCPSPGPPTPP) the composition is skewed to pro residues. The LXXLL motif 1 motif lies at 561 to 565 (LCRLL). The C6-type zinc finger occupies 595–620 (CSRCHHGLFNTHWRCSHCSHRLCVAC). The interval 697-746 (GDGGQQKEPTEKTPPTPQPSCNGDSNRTKDIKEETPDSTESPAEDGAGRS) is disordered. The span at 722 to 731 (NRTKDIKEET) shows a compositional bias: basic and acidic residues. The LXXLL motif 2 signature appears at 753 to 757 (LCELL). The region spanning 939 to 1150 (DASRVQNLAS…LSAQLYHQGA (212 aa)) is the JmjC domain. Fe cation is bound by residues C1000, E1002, and H1118.

Fe(2+) serves as cofactor. As to expression, expressed predominantly in brain, hair follicles and interfollicular epidermis. No expression in dermis.

The protein resides in the nucleus. It carries out the reaction N(6),N(6)-dimethyl-L-lysyl(9)-[histone H3] + 2 2-oxoglutarate + 2 O2 = L-lysyl(9)-[histone H3] + 2 formaldehyde + 2 succinate + 2 CO2. In terms of biological role, histone demethylase that specifically demethylates both mono- and dimethylated 'Lys-9' of histone H3. May act as a transcription regulator controlling hair biology (via targeting of collagens), neural activity, and cell cycle. In Mus musculus (Mouse), this protein is Lysine-specific demethylase hairless (Hr).